The primary structure comprises 247 residues: Phosphoribosylaminoimidazole-succinocarboxamide synthase (247 aa).

It belongs to the SAICAR synthetase family.

It catalyses the reaction 5-amino-1-(5-phospho-D-ribosyl)imidazole-4-carboxylate + L-aspartate + ATP = (2S)-2-[5-amino-1-(5-phospho-beta-D-ribosyl)imidazole-4-carboxamido]succinate + ADP + phosphate + 2 H(+). It functions in the pathway purine metabolism; IMP biosynthesis via de novo pathway; 5-amino-1-(5-phospho-D-ribosyl)imidazole-4-carboxamide from 5-amino-1-(5-phospho-D-ribosyl)imidazole-4-carboxylate: step 1/2. The sequence is that of Phosphoribosylaminoimidazole-succinocarboxamide synthase from Prochlorococcus marinus (strain NATL1A).